The following is a 172-amino-acid chain: Large ribosomal subunit protein uL10 (172 aa).

This sequence belongs to the universal ribosomal protein uL10 family. Part of the ribosomal stalk of the 50S ribosomal subunit. The N-terminus interacts with L11 and the large rRNA to form the base of the stalk. The C-terminus forms an elongated spine to which 3 L12 dimers bind in a sequential fashion forming a heptameric L10(L12)2(L12)2(L12)2 complex.

Functionally, forms part of the ribosomal stalk, playing a central role in the interaction of the ribosome with GTP-bound translation factors. This Agrobacterium fabrum (strain C58 / ATCC 33970) (Agrobacterium tumefaciens (strain C58)) protein is Large ribosomal subunit protein uL10.